The primary structure comprises 1234 residues: 1-phosphatidylinositol 4,5-bisphosphate phosphodiesterase beta-3 (1234 aa).

Ala-2 is modified (N-acetylalanine). Residues 315 to 466 enclose the PI-PLC X-box domain; the sequence is MDMTQPLSAY…LMGRILVKNK (152 aa). Residues His-330 and His-377 contribute to the active site. Positions 465–586 are disordered; sequence NKKRHRPSTG…GTASSEVNAT (122 aa). Residues Ser-472, Ser-488, Ser-493, and Ser-535 each carry the phosphoserine modification. Positions 486–513 are enriched in low complexity; sequence EQSNSALSESSAATEPSSPQLGSPSSDS. Over residues 554-566 the composition is skewed to acidic residues; the sequence is REDEEEDEEEEET. Residues 577–586 show a composition bias toward polar residues; that stretch reads GTASSEVNAT. The 117-residue stretch at 589 to 705 folds into the PI-PLC Y-box domain; sequence MSTLVNYVEP…GYLLKPEFMR (117 aa). Residues 706–834 enclose the C2 domain; sequence RPDKSFDPFT…RNEANQPLCL (129 aa). The segment covering 886–907 has biased composition (polar residues); the sequence is ASTEMCQETPSQQQGSQLSSNP. Positions 886–936 are disordered; it reads ASTEMCQETPSQQQGSQLSSNPVPNPLDDSPRWPPGPTTSPTSTSLSSPGQ. A compositionally biased stretch (low complexity) spans 924 to 934; sequence TSPTSTSLSSP. Ser-925 and Ser-1105 each carry phosphoserine. The segment at 1196–1234 is disordered; the sequence is SEGLGDGPLVACASNGHAAGSGGHQSGADSESQEENTQL. The interval 1231 to 1234 is interaction with SHANK2; sequence NTQL.

Interacts with LPAR2. Interacts with SHANK2. Ca(2+) serves as cofactor. Expressed in parotid gland, brain, liver, uterus, lung, heart, adrenal gland, and ovary. Not detected in spleen, pancreas, intestine, thymus or kidney.

It is found in the cytoplasm. The protein localises to the membrane. Its subcellular location is the nucleus. It catalyses the reaction a 1,2-diacyl-sn-glycero-3-phospho-(1D-myo-inositol-4,5-bisphosphate) + H2O = 1D-myo-inositol 1,4,5-trisphosphate + a 1,2-diacyl-sn-glycerol + H(+). The enzyme catalyses a 1,2-diacyl-sn-glycero-3-phospho-(1D-myo-inositol) + H2O = 1D-myo-inositol 1-phosphate + a 1,2-diacyl-sn-glycerol + H(+). With respect to regulation, activated by G(q)/G(11) G alpha proteins in response to ligand-binding to G protein-coupled receptors. Catalyzes the production of the second messenger molecules diacylglycerol (DAG) and inositol 1,4,5-trisphosphate (IP3). Key transducer of G protein-coupled receptor signaling: activated by G(q)/G(11) G alpha proteins downstream of G protein-coupled receptors activation. In neutrophils, participates in a phospholipase C-activating N-formyl peptide-activated GPCR (G protein-coupled receptor) signaling pathway by promoting RASGRP4 activation by DAG, to promote neutrophil functional responses. The protein is 1-phosphatidylinositol 4,5-bisphosphate phosphodiesterase beta-3 of Rattus norvegicus (Rat).